Reading from the N-terminus, the 382-residue chain is GDP-mannose transporter 1 (382 aa).

Residues 1–40 are Cytoplasmic-facing; that stretch reads MADDKKTNEYTVEMDKLDHGNKNFEAPAPAVRPRGPPAAQ. A helical membrane pass occupies residues 41 to 61; it reads LANNPILPVLAYCGSSILMTV. Residues 62 to 71 lie on the Lumenal side of the membrane; it reads MNKYVLSGTD. Residues 72 to 92 traverse the membrane as a helical segment; the sequence is FNLNFFLLCVQSIVCIVAIQT. The Cytoplasmic segment spans residues 93-110; sequence CKSSKLITYRDFNSDEAK. The chain crosses the membrane as a helical span at residues 111–127; sequence KWFPITLLLIGMIYTGS. At 128-134 the chain is on the lumenal side; sequence KALQYLS. A helical membrane pass occupies residues 135–151; sequence IPVYTIFKNLTIILIAY. At 152–160 the chain is on the cytoplasmic side; that stretch reads GEVLWFGGS. A helical membrane pass occupies residues 161-182; it reads VTGMTLFSFGLMVLSSIIAAWA. The Lumenal portion of the chain corresponds to 183–200; that stretch reads DIKHAVESSGDATAKVST. Residues 201–221 traverse the membrane as a helical segment; that stretch reads LNAGYIWMLINCLCTSSYVLG. Residues 222-233 lie on the Cytoplasmic side of the membrane; that stretch reads MRKRIKLTNFKD. The chain crosses the membrane as a helical span at residues 234–254; it reads FDTMFYNNLLSIPVLLVLTFL. At 255-274 the chain is on the lumenal side; the sequence is MEDWSSANIARNFPPADRNG. The helical transmembrane segment at 275–295 threads the bilayer; the sequence is ILFAMILSGLSSVFISYTSAW. Residues 296–303 are Cytoplasmic-facing; the sequence is CVRVTSST. A helical transmembrane segment spans residues 304–324; it reads TYSMVGALNKLPIALSGLIFF. Residues 325–327 are Lumenal-facing; it reads DAP. A helical transmembrane segment spans residues 328-348; that stretch reads VTFPSVSAIVVGFISGIVYAV. Topologically, residues 349–382 are cytoplasmic; that stretch reads AKIKQSAKPKTGVLPMSNPPVSASSQSMRDSLRS. The disordered stretch occupies residues 358–382; sequence KTGVLPMSNPPVSASSQSMRDSLRS. Over residues 367-382 the composition is skewed to polar residues; that stretch reads PPVSASSQSMRDSLRS.

Belongs to the TPT transporter family. SLC35D subfamily. In terms of assembly, homooligomer.

It is found in the golgi apparatus membrane. Its subcellular location is the cytoplasmic vesicle membrane. The protein resides in the endoplasmic reticulum membrane. Involved in the import of GDP-mannose from the cytoplasm into the Golgi lumen. This is GDP-mannose transporter 1 (gmt1) from Neosartorya fischeri (strain ATCC 1020 / DSM 3700 / CBS 544.65 / FGSC A1164 / JCM 1740 / NRRL 181 / WB 181) (Aspergillus fischerianus).